Consider the following 229-residue polypeptide: Ribonuclease S-6 (229 aa).

Residues 1-27 (MGITGMIYMVPMVFSLIVLISCSSTMG) form the signal peptide. Gln36 is an RNA binding site. A disulfide bridge connects residues Cys42 and Cys49. His60 provides a ligand contact to RNA. The active-site Proton donor is His60. Cys75 and Cys119 are disulfide-bonded. 2 N-linked (GlcNAc) asparagine glycosylation sites follow: Asn77 and Asn87. RNA-binding positions include 98 to 99 (NV), Phe108, 111 to 112 (RQ), and 115 to 116 (KH). The active site involves Gln112. His116 functions as the Proton acceptor in the catalytic mechanism. The N-linked (GlcNAc...) (high mannose) asparagine glycan is linked to Asn145. 2 disulfide bridges follow: Cys184–Cys222 and Cys199–Cys210. N-linked (GlcNAc) asparagine; alternate glycosylation occurs at Asn188. Asn188 and Asn203 each carry an N-linked (GlcNAc...) asparagine; alternate glycan.

Belongs to the RNase T2 family. The N-glycans attached at Asn-188 and Asn-203 consist of either monosaccharide (GlcNAc) or disaccharide (GlcNAc-GlcNAc) that could not be distinguished.

It carries out the reaction a ribonucleotidyl-ribonucleotide-RNA + H2O = a 3'-end 3'-phospho-ribonucleotide-RNA + a 5'-end dephospho-ribonucleoside-RNA + H(+). Self-incompatibility (SI) is the inherited ability of a flowering plant to prevent self-fertilization by discriminating between self and non-self pollen during pollination. In many species, self-incompatibility is controlled by the single, multiallelic locus S. The sequence is that of Ribonuclease S-6 from Pyrus pyrifolia (Chinese pear).